The sequence spans 1148 residues: Small G protein signaling modulator 1 (1148 aa).

Residues histidine 36–histidine 190 form the RUN domain. Positions leucine 256–methionine 297 are important for interaction with RAB9A and RAB9B. Positions valine 301–proline 350 are required for interaction with RAP family members. 3 disordered regions span residues aspartate 377–aspartate 411, aspartate 700–glutamate 830, and glycine 871–glutamate 894. A compositionally biased stretch (basic residues) spans glycine 385–serine 397. The Rab-GAP TBC domain occupies glycine 617–lysine 1081. Over residues threonine 702 to glutamine 716 the composition is skewed to polar residues. Positions alanine 742–proline 751 are enriched in basic and acidic residues. The span at asparagine 757–threonine 802 shows a compositional bias: polar residues. Composition is skewed to basic and acidic residues over residues arginine 805–serine 816 and glycine 871–alanine 883. Residues aspartate 884–glutamate 894 show a composition bias toward acidic residues.

Belongs to the RUTBC family. In terms of assembly, interacts with RAB9A (GTP-bound form) and RAB9B (GTP-bound form); has much lower affinity for GDP-bound RAB9A and RAB9B. Interacts with RAB3A, RAB4A, RAB5A, RAB8A, RAB11A, RAP1A, RAP1B, RAP2A and RAP2B. No interaction with RAB27A. In terms of tissue distribution, mainly expressed in brain, heart and testis.

The protein resides in the golgi apparatus. The protein localises to the trans-Golgi network. It is found in the cytoplasmic vesicle membrane. It localises to the cytoplasm. In terms of biological role, interacts with numerous Rab family members, functioning as Rab effector for some, and as GTPase activator for others. Promotes GTP hydrolysis by RAB34 and RAB36. Probably functions as a GTPase effector with RAB9A and RAB9B; does not stimulate GTP hydrolysis with RAB9A and RAB9B. The polypeptide is Small G protein signaling modulator 1 (SGSM1) (Homo sapiens (Human)).